Here is an 89-residue protein sequence, read N- to C-terminus: Small ribosomal subunit protein uS15 (89 aa).

The protein belongs to the universal ribosomal protein uS15 family. As to quaternary structure, part of the 30S ribosomal subunit. Forms a bridge to the 50S subunit in the 70S ribosome, contacting the 23S rRNA.

Its function is as follows. One of the primary rRNA binding proteins, it binds directly to 16S rRNA where it helps nucleate assembly of the platform of the 30S subunit by binding and bridging several RNA helices of the 16S rRNA. In terms of biological role, forms an intersubunit bridge (bridge B4) with the 23S rRNA of the 50S subunit in the ribosome. The chain is Small ribosomal subunit protein uS15 from Agrobacterium fabrum (strain C58 / ATCC 33970) (Agrobacterium tumefaciens (strain C58)).